The sequence spans 619 residues: Laccase (619 aa).

The N-terminal stretch at 1 to 21 (MKFLGIAALVAGLLAPSLVLG) is a signal peptide. A propeptide spanning residues 22–49 (APAPGTEGVNLLTPVDKRQDSQAERYGG) is cleaved from the precursor. Cys55 and Cys63 are disulfide-bonded. Plastocyanin-like domains lie at 84–207 (TRRY…IVIN) and 216–373 (VDLG…LPTN). An N-linked (GlcNAc...) asparagine glycan is attached at Asn139. The Cu cation site is built by His144, His146, His189, and His191. Cystine bridges form between Cys165/Cys586 and Cys349/Cys383. Asn282, Asn295, and Asn340 each carry an N-linked (GlcNAc...) asparagine glycan. Asn422 and Asn444 each carry an N-linked (GlcNAc...) asparagine glycan. One can recognise a Plastocyanin-like 3 domain in the interval 431-566 (NKPVLEYVLT…GGLSNQFLER (136 aa)). Cu cation contacts are provided by His477, His480, His482, His548, Cys549, His550, and His554. A propeptide spanning residues 607 to 619 (RSGVKAREVKMKW) is cleaved from the precursor.

This sequence belongs to the multicopper oxidase family. It depends on Cu cation as a cofactor.

It localises to the secreted. The enzyme catalyses 4 hydroquinone + O2 = 4 benzosemiquinone + 2 H2O. Functionally, lignin degradation and detoxification of lignin-derived products. This chain is Laccase (lacc), found in Neurospora crassa (strain ATCC 24698 / 74-OR23-1A / CBS 708.71 / DSM 1257 / FGSC 987).